A 500-amino-acid polypeptide reads, in one-letter code: Lysine--tRNA ligase (500 aa).

Mg(2+) is bound by residues Glu410 and Glu417.

It belongs to the class-II aminoacyl-tRNA synthetase family. Homodimer. Mg(2+) is required as a cofactor.

Its subcellular location is the cytoplasm. It catalyses the reaction tRNA(Lys) + L-lysine + ATP = L-lysyl-tRNA(Lys) + AMP + diphosphate. This Shewanella amazonensis (strain ATCC BAA-1098 / SB2B) protein is Lysine--tRNA ligase.